We begin with the raw amino-acid sequence, 756 residues long: MGKRGSRSQSQLLNTLTKKQKKHLRDFGEEHPFYDRVSRKEAKPQICQLSESSDSSDSESDSESEPQQVSGYHRLLATLKNVSEEEEEDEEEEEEEDSIVDDAEMNDEDGGSDVSVEEEMAAESTESPENVALSADPEGKEDGEEPPGTSQTSPEEFTDAKHESLFSLETNFLEEESGDNSSLKASQDPFLQHVNKELKEKAIQAVATNPKTTHELKWPILGQLFFSSKFQKLETFKPPKDIDLKSLHLQKPLESTWTKTNSQFLSGPQKSSSPFTPLQKELFLIMNSYRDLFYPERTALKNGEEIRHVYCLHVINHILKANAQVLGNNSRRRSQKFGVGDDDDFRDQGLTRPKVLIVVPFREAALRVVQLFISLLEGDSKKKIIVSNKKRFQGEYGSDPEERPPNLKRPEDYEAVFVGNIDDHFRIGVAILQRSIRLYAPFYSSDILIASPLGLRTIIGGEGEKKRDFDFLSSIELLIIDQADIYLMQNWEHVLHLMNHMNLLPLDSHGVDFSRVRMWSLNNWSKYYRQTLLFGALQDAQINSVFNKYCVNMQGQVAVRNVPMTGSISHVLVQLPHVFQRMEAENLASVIDARFNFFVNKILPQYRDAVMSHTLIYIPSYFDFVRLRNYFKKEELNFTHICEYTQKSGVSRARHFFLQGEKQFLLFTERFHFYKRYTIKGIRNLIFYELPTYPHFYSEICNMLRATNRGEEATWTCTVLYSKYDAQRLAAVVGVERAAQMLQSNKNVHLFITGEK.

The segment at 1–159 (MGKRGSRSQS…SQTSPEEFTD (159 aa)) is disordered. Promotes p53/TP53 degradation regions lie at residues 1 to 185 (MGKR…SLKA) and 573 to 635 (VQLP…KKEE). Ser-10 is subject to Phosphoserine. Over residues 25-43 (RDFGEEHPFYDRVSRKEAK) the composition is skewed to basic and acidic residues. Ser-50, Ser-52, Ser-58, Ser-60, Ser-62, and Ser-64 each carry phosphoserine. 2 stretches are compositionally biased toward acidic residues: residues 54-64 (DSSDSESDSES) and 84-121 (EEEE…EEMA). A represses p53/TP53 degradation region spans residues 636–697 (LNFTHICEYT…YELPTYPHFY (62 aa)).

It belongs to the UTP25 family. In terms of assembly, interacts with CAPN3; the interaction is required for CAPN3 translocation to the nucleolus. In terms of processing, phosphorylated. Phosphorylation is required to promote p53/TP53 degradation in the nucleolus which promotes cell cycle progression and liver development. In terms of tissue distribution, expressed in colon.

The protein localises to the nucleus. The protein resides in the nucleolus. In terms of biological role, component of the ribosomal small subunit processome for the biogenesis of ribosomes, functions in pre-ribosomal RNA (pre-rRNA) processing. Essential for embryonic development in part through the regulation of p53 pathway. Controls the expansion growth of digestive organs and liver. Also involved in the sympathetic neuronal development. Mediates, with CAPN3, the proteasome-independent degradation of p53/TP53. This chain is U3 small nucleolar RNA-associated protein 25 homolog, found in Homo sapiens (Human).